The chain runs to 185 residues: Ribosome-recycling factor (185 aa).

This sequence belongs to the RRF family.

Its subcellular location is the cytoplasm. Its function is as follows. Responsible for the release of ribosomes from messenger RNA at the termination of protein biosynthesis. May increase the efficiency of translation by recycling ribosomes from one round of translation to another. In Streptococcus thermophilus (strain ATCC BAA-491 / LMD-9), this protein is Ribosome-recycling factor.